We begin with the raw amino-acid sequence, 170 residues long: Protein BTG1 (170 aa).

This sequence belongs to the BTG family.

In terms of biological role, anti-proliferative protein. This Gallus gallus (Chicken) protein is Protein BTG1 (BTG1).